The primary structure comprises 1137 residues: AP-4 complex subunit epsilon-1 (1137 aa).

2 positions are modified to phosphoserine: Ser-700 and Ser-857. Residues 727 to 1137 (SGALPVPQES…YQCQKVMEGS (411 aa)) form an interaction with TEPSIN region.

It belongs to the adaptor complexes large subunit family. In terms of assembly, adaptor protein complex 4 (AP-4) is a heterotetramer composed of two large adaptins (epsilon-type subunit AP4E1 and beta-type subunit AP4B1), a medium adaptin (mu-type subunit AP4M1) and a small adaptin (sigma-type AP4S1). Interacts with TEPSIN. Interacts with GRIA2; probably indirect it mediates the somatodendritic localization of GRIA2 in neurons. As to expression, widely expressed.

It localises to the golgi apparatus. The protein resides in the trans-Golgi network membrane. Functionally, component of the adaptor protein complex 4 (AP-4). Adaptor protein complexes are vesicle coat components involved both in vesicle formation and cargo selection. They control the vesicular transport of proteins in different trafficking pathways. AP-4 forms a non clathrin-associated coat on vesicles departing the trans-Golgi network (TGN) and may be involved in the targeting of proteins from the trans-Golgi network (TGN) to the endosomal-lysosomal system. It is also involved in protein sorting to the basolateral membrane in epithelial cells and the proper asymmetric localization of somatodendritic proteins in neurons. AP-4 is involved in the recognition and binding of tyrosine-based sorting signals found in the cytoplasmic part of cargos, but may also recognize other types of sorting signal. The polypeptide is AP-4 complex subunit epsilon-1 (Homo sapiens (Human)).